The sequence spans 219 residues: NAD(P)H-quinone oxidoreductase subunit I (219 aa).

2 4Fe-4S ferredoxin-type domains span residues 55-84 (GRIH…VDWV) and 95-124 (RNYS…MTEE). Residues cysteine 64, cysteine 67, cysteine 70, cysteine 74, cysteine 104, cysteine 107, cysteine 110, and cysteine 114 each coordinate [4Fe-4S] cluster. The interval 192–219 (LKAAGSMKAAEDERESSSSASNMEESAG) is disordered. The segment covering 208–219 (SSSASNMEESAG) has biased composition (low complexity).

This sequence belongs to the complex I 23 kDa subunit family. As to quaternary structure, NDH-1 is composed of at least 11 different subunits. [4Fe-4S] cluster is required as a cofactor.

It localises to the cellular thylakoid membrane. It catalyses the reaction a plastoquinone + NADH + (n+1) H(+)(in) = a plastoquinol + NAD(+) + n H(+)(out). It carries out the reaction a plastoquinone + NADPH + (n+1) H(+)(in) = a plastoquinol + NADP(+) + n H(+)(out). In terms of biological role, NDH-1 shuttles electrons from an unknown electron donor, via FMN and iron-sulfur (Fe-S) centers, to quinones in the respiratory and/or the photosynthetic chain. The immediate electron acceptor for the enzyme in this species is believed to be plastoquinone. Couples the redox reaction to proton translocation, and thus conserves the redox energy in a proton gradient. The sequence is that of NAD(P)H-quinone oxidoreductase subunit I from Synechococcus sp. (strain CC9311).